The primary structure comprises 82 residues: Sec-independent protein translocase protein TatA (82 aa).

The helical transmembrane segment at 1–21 (MGSFSIWHWLIVLLVVVMIFG) threads the bilayer. The disordered stretch occupies residues 39–82 (FKDGMKDGSTTDAPAASSAPAAQVTGQPANSDKSTIDVEARQKS). Over residues 51 to 60 (APAASSAPAA) the composition is skewed to low complexity. Residues 62–71 (VTGQPANSDK) show a composition bias toward polar residues. The segment covering 72 to 82 (STIDVEARQKS) has biased composition (basic and acidic residues).

The protein belongs to the TatA/E family. As to quaternary structure, the Tat system comprises two distinct complexes: a TatABC complex, containing multiple copies of TatA, TatB and TatC subunits, and a separate TatA complex, containing only TatA subunits. Substrates initially bind to the TatABC complex, which probably triggers association of the separate TatA complex to form the active translocon.

It is found in the cell inner membrane. In terms of biological role, part of the twin-arginine translocation (Tat) system that transports large folded proteins containing a characteristic twin-arginine motif in their signal peptide across membranes. TatA could form the protein-conducting channel of the Tat system. This Variovorax paradoxus (strain S110) protein is Sec-independent protein translocase protein TatA.